The primary structure comprises 204 residues: Outer-membrane lipoprotein carrier protein (204 aa).

The N-terminal stretch at 1 to 21 (MKKIAVTCALLSAFAVSSVWA) is a signal peptide. The tract at residues 169-204 (QRSSYQLKSQQNGAVDMSKFTFTPPQGVTVDDQRNK) is disordered. Polar residues predominate over residues 171 to 181 (SSYQLKSQQNG).

This sequence belongs to the LolA family. Monomer.

The protein resides in the periplasm. Participates in the translocation of lipoproteins from the inner membrane to the outer membrane. Only forms a complex with a lipoprotein if the residue after the N-terminal Cys is not an aspartate (The Asp acts as a targeting signal to indicate that the lipoprotein should stay in the inner membrane). The sequence is that of Outer-membrane lipoprotein carrier protein from Cronobacter sakazakii (strain ATCC BAA-894) (Enterobacter sakazakii).